We begin with the raw amino-acid sequence, 264 residues long: uncharacterized protein (264 aa).

An ATP-binding site is contributed by 15–22 (KGGTGKTT).

The protein belongs to the ParA family. MinD subfamily.

This is an uncharacterized protein from Methanocaldococcus jannaschii (strain ATCC 43067 / DSM 2661 / JAL-1 / JCM 10045 / NBRC 100440) (Methanococcus jannaschii).